The following is a 227-amino-acid chain: Zeamatin (227 aa).

Positions 1–20 are cleaved as a signal peptide; the sequence is MAGSVAIVGIFVALLAVAGE. Intrachain disulfides connect Cys30/Cys226, Cys72/Cys82, Cys87/Cys93, Cys139/Cys215, Cys145/Cys198, Cys153/Cys163, Cys167/Cys176, and Cys177/Cys185.

The protein belongs to the thaumatin family.

Has antifungal activity. Inhibits Candida albicans and Trichoderma reesei; marginal inhibition observed against Alternaria solani and Neurospora crassa. This chain is Zeamatin (Zlp), found in Zea mays (Maize).